The sequence spans 150 residues: MQINTKNFGIIEYNPDDVIYFEEGIPGFEDLHNFLIITDNREDMPFKWLQAIDNTDIAFVVIDPRVFKPNYTFEIDEELIQALQIEDINHLLIYVIVVIPDEIEKMTANLKAPIIINAKNNKGKQAILDNDEYLIKHPILEELKNAYSNA.

The protein belongs to the FliW family. As to quaternary structure, interacts with translational regulator CsrA and flagellin(s).

It localises to the cytoplasm. In terms of biological role, acts as an anti-CsrA protein, binds CsrA and prevents it from repressing translation of its target genes, one of which is flagellin. Binds to flagellin and participates in the assembly of the flagellum. In Thermoanaerobacter pseudethanolicus (strain ATCC 33223 / 39E) (Clostridium thermohydrosulfuricum), this protein is Flagellar assembly factor FliW.